Reading from the N-terminus, the 95-residue chain is Aspartyl/glutamyl-tRNA(Asn/Gln) amidotransferase subunit C (95 aa).

This sequence belongs to the GatC family. Heterotrimer of A, B and C subunits.

It catalyses the reaction L-glutamyl-tRNA(Gln) + L-glutamine + ATP + H2O = L-glutaminyl-tRNA(Gln) + L-glutamate + ADP + phosphate + H(+). The enzyme catalyses L-aspartyl-tRNA(Asn) + L-glutamine + ATP + H2O = L-asparaginyl-tRNA(Asn) + L-glutamate + ADP + phosphate + 2 H(+). In terms of biological role, allows the formation of correctly charged Asn-tRNA(Asn) or Gln-tRNA(Gln) through the transamidation of misacylated Asp-tRNA(Asn) or Glu-tRNA(Gln) in organisms which lack either or both of asparaginyl-tRNA or glutaminyl-tRNA synthetases. The reaction takes place in the presence of glutamine and ATP through an activated phospho-Asp-tRNA(Asn) or phospho-Glu-tRNA(Gln). The protein is Aspartyl/glutamyl-tRNA(Asn/Gln) amidotransferase subunit C of Citrifermentans bemidjiense (strain ATCC BAA-1014 / DSM 16622 / JCM 12645 / Bem) (Geobacter bemidjiensis).